Reading from the N-terminus, the 197-residue chain is Ribosomal RNA large subunit methyltransferase E (197 aa).

Residues Gly50, Trp52, Asp67, Asp83, and Asp111 each contribute to the S-adenosyl-L-methionine site. The active-site Proton acceptor is Lys151.

This sequence belongs to the class I-like SAM-binding methyltransferase superfamily. RNA methyltransferase RlmE family.

The protein localises to the cytoplasm. It carries out the reaction uridine(2552) in 23S rRNA + S-adenosyl-L-methionine = 2'-O-methyluridine(2552) in 23S rRNA + S-adenosyl-L-homocysteine + H(+). Specifically methylates the uridine in position 2552 of 23S rRNA at the 2'-O position of the ribose in the fully assembled 50S ribosomal subunit. This Thermoplasma volcanium (strain ATCC 51530 / DSM 4299 / JCM 9571 / NBRC 15438 / GSS1) protein is Ribosomal RNA large subunit methyltransferase E.